We begin with the raw amino-acid sequence, 718 residues long: Tensin-4 (718 aa).

Positions 1 to 14 (MSSSLLTGGHVVSL) are cleaved as a signal peptide. Disordered regions lie at residues 188–244 (RETR…GLRA) and 272–437 (LPHS…AKDM). Residues 192–207 (SSSNESLIFSGNQGRG) show a composition bias toward polar residues. Over residues 208–219 (SSPHTPSSLSNS) the composition is skewed to low complexity. The residue at position 230 (Ser-230) is a Phosphoserine. Low complexity predominate over residues 272–304 (LPHSSLSSYPPSSRSLGSPASSSSSLHSLDRGS). Composition is skewed to polar residues over residues 306 to 316 (CVRSSDAQVPS), 337 to 349 (QASS…TNSM), 367 to 393 (PAQQ…QATK), and 405 to 415 (TSPSHLCQATK). In terms of domain architecture, SH2 spans 451–558 (WFKPSITREQ…ALPCKLTIPQ (108 aa)). Positions 585–711 (CHTLYLTSVS…SQVISLVTAL (127 aa)) constitute a PTB domain.

It belongs to the PTEN phosphatase protein family. As to quaternary structure, interacts (via SH2 domain) with Rho GTPase-activating protein DLC1 (via C-terminus); the interaction is independent of DLC1 tyrosine phosphorylation. Interacts with integrin ITGB1; the interaction displaces tensin TNS3 from the ITGB1 cytoplasmic tail and promotes ITGB1 stability. Interacts (via SH2 domain) with E3 ubiquitin-protein ligase CBL (phosphorylated on 'Tyr-781'); the interaction is enhanced in the presence of EGF and reduces interaction of CBL with EGFR. Interacts (via SH2 domain) with receptor tyrosine kinase MET (when phosphorylated); the interaction increases MET protein stability.

It localises to the cell junction. Its subcellular location is the focal adhesion. The protein resides in the cytoplasm. The protein localises to the cytoskeleton. Functionally, promotes EGF-induced cell migration by displacing tensin TNS3 from the cytoplasmic tail of integrin ITGB1 which results in dissociation of TNS3 from focal adhesions, disassembly of actin stress fibers and initiation of cell migration. Suppresses ligand-induced degradation of EGFR by reducing EGFR ubiquitination in the presence of EGF. Increases MET protein stability by inhibiting MET endocytosis and subsequent lysosomal degradation which leads to increased cell survival, proliferation and migration. The sequence is that of Tensin-4 (Tns4) from Rattus norvegicus (Rat).